A 460-amino-acid polypeptide reads, in one-letter code: MSGKSIFDKLWDRHVITGDEGQPQLMYVDQHYIHEVTSPQAFQGLRDAGRKVRRPDLTFGTFDHNVPTVNIFDIRDAISKAQIDKLAENVIEFGIDNASHGSDKQGIVHMVGPETGRTQPGKFIVCGDSHTATHGAFGAIAFGIGTSEVEHVFATQTLWQVKPKKMLLEFTGKPQKGIYSKDYILALIAKYGVACGVGYVVEYRGEAIDRLTMEERMTICNMSIEFGSKMGIMNPDQTTYDYMRGRECVPEDFDAAVADWKTLVSDDDAEYDKVIRMDVSELAPMVTWGTNPSMGVDFDTPFPEVRDMNDERAYHYMGLRPGQKAEDINLGYIFIGSCTNARLSDLQLAARIVKGKKISPNLTAIVVPGSRPVKRAAEKIGLDKIFKDAGFEWREPGCSMCLGMNPDKVPDGVHCASTSNRNFEDRQGFGAKTHLCSPAMAAAAAISGHFVDVRRMPEVQ.

The [4Fe-4S] cluster site is built by Cys338, Cys398, and Cys401.

This sequence belongs to the aconitase/IPM isomerase family. LeuC type 1 subfamily. Heterodimer of LeuC and LeuD. [4Fe-4S] cluster is required as a cofactor.

It carries out the reaction (2R,3S)-3-isopropylmalate = (2S)-2-isopropylmalate. Its pathway is amino-acid biosynthesis; L-leucine biosynthesis; L-leucine from 3-methyl-2-oxobutanoate: step 2/4. Catalyzes the isomerization between 2-isopropylmalate and 3-isopropylmalate, via the formation of 2-isopropylmaleate. This is 3-isopropylmalate dehydratase large subunit from Streptococcus thermophilus (strain CNRZ 1066).